Reading from the N-terminus, the 674-residue chain is DNA-directed RNA polymerase subunit beta' (674 aa).

Zn(2+)-binding residues include cysteine 69, cysteine 71, cysteine 87, and cysteine 90. Residues aspartate 494, aspartate 496, and aspartate 498 each coordinate Mg(2+).

The protein belongs to the RNA polymerase beta' chain family. RpoC1 subfamily. In terms of assembly, in plastids the minimal PEP RNA polymerase catalytic core is composed of four subunits: alpha, beta, beta', and beta''. When a (nuclear-encoded) sigma factor is associated with the core the holoenzyme is formed, which can initiate transcription. Mg(2+) is required as a cofactor. Zn(2+) serves as cofactor.

Its subcellular location is the plastid. It is found in the chloroplast. It catalyses the reaction RNA(n) + a ribonucleoside 5'-triphosphate = RNA(n+1) + diphosphate. Functionally, DNA-dependent RNA polymerase catalyzes the transcription of DNA into RNA using the four ribonucleoside triphosphates as substrates. The sequence is that of DNA-directed RNA polymerase subunit beta' from Psilotum nudum (Whisk fern).